Consider the following 356-residue polypeptide: Solute carrier family 25 member 3 (356 aa).

The transit peptide at 1-44 directs the protein to the mitochondrion; that stretch reads MFSSVAHLARANPFNAPHLQLVHDVSGPRSPPGPPRRSRHLAAA. The Mitochondrial intermembrane segment spans residues 45 to 57; it reads AVEGYSCEFGSMK. Solcar repeat units follow at residues 57–141, 154–238, and 255–333; these read KYYA…FKAL, WRTS…TVEA, and EQLV…VKVY. A helical transmembrane segment spans residues 58 to 80; sequence YYALCGFGGVLSCGLTHTAVVPL. Residues 81-115 lie on the Mitochondrial matrix side of the membrane; it reads DLVKCRMQVDPQKYKGIFNGFSITLKEDGVRGLAK. Lys-93 is subject to N6-acetyllysine. Position 106 is an N6-methyllysine (Lys-106). A helical membrane pass occupies residues 116-135; sequence GWAPTLIGYSMQGLCKFGFY. The Mitochondrial intermembrane segment spans residues 136–155; it reads EVFKALYSNILGEENTYLWR. Residues 156–177 traverse the membrane as a helical segment; sequence TSLYLAASASAEFFADIALAPM. At 178–212 the chain is on the mitochondrial matrix side; the sequence is EAAKVRIQTQPGYANTLREAVPKMYKEEGLNAFYK. A Phosphotyrosine modification is found at Tyr-190. Position 203 is an N6-acetyllysine (Lys-203). The helical transmembrane segment at 213-232 threads the bilayer; that stretch reads GVAPVWMRQIPYTMMKFACF. The Mitochondrial intermembrane segment spans residues 233–255; the sequence is ERTVEALYKFVVPKPRSECTKAE. The chain crosses the membrane as a helical span at residues 256-278; the sequence is QLVVTFVAGYIAGVFCAIVSHPA. Topologically, residues 279–308 are mitochondrial matrix; it reads DSVVSVLNKEKGSTASQVLQRLGFRGVWKG. A helical transmembrane segment spans residues 309–327; the sequence is LFARIIMIGTLTALQWFIY. The Mitochondrial intermembrane portion of the chain corresponds to 328–356; the sequence is DSVKVYFRLPRPPPPEMPESLKKKLGLTE.

This sequence belongs to the mitochondrial carrier (TC 2.A.29) family. Interacts with PPIF; the interaction is impaired by CsA.

It is found in the mitochondrion inner membrane. The catalysed reaction is phosphate(in) + H(+)(in) = phosphate(out) + H(+)(out). Its function is as follows. Inorganic ion transporter that transports phosphate or copper ions across the mitochondrial inner membrane into the matrix compartment. Mediates proton-coupled symport of phosphate ions necessary for mitochondrial oxidative phosphorylation of ADP to ATP. Transports copper ions probably in the form of anionic copper(I) complexes to maintain mitochondrial matrix copper pool and to supply copper for cytochrome C oxidase complex assembly. May also play a role in regulation of the mitochondrial permeability transition pore (mPTP). The polypeptide is Solute carrier family 25 member 3 (Rattus norvegicus (Rat)).